We begin with the raw amino-acid sequence, 430 residues long: MNKLVHIIGAGLAGSEAAWQLVKNGFNVVIHEMKRVKKSPVHVSENFAELVCSNSLKSTDLKNAEGLLKAEMEIWGSLILECAYNNSVPAGKALAVDREKFSQCVTEKLLQTGLVKVVWEEVEKPYTDDIWIIATGPTTDGKLAEWIREQTGGFFNFFDAVAPIVSAESINMDVCFVADRYGVGTGDYINCPMTKEEYERFWNELVNAQVIEIEDFDRKLLFERCQPIEEIARSGKDAMRYGPLRPVGIVDPKTGKEPYAVIQLRKENVEGTMYNIVGFQTRLKWGEQRRIIQLIPGLENAEILRYGVMHRNSYIDSPKVLDEYLRLKKMPNVFFAGQITGVEGYVESAMTGLYVGLNISRLILGKDMIKFPEKTMCGALVRYITTAPELKPMYANFGLLGGGKDREKIALKALDEMKKFYQITSLTIGG.

9 to 14 (GAGLAG) serves as a coordination point for FAD.

This sequence belongs to the MnmG family. TrmFO subfamily. Requires FAD as cofactor.

Its subcellular location is the cytoplasm. The catalysed reaction is uridine(54) in tRNA + (6R)-5,10-methylene-5,6,7,8-tetrahydrofolate + NADH + H(+) = 5-methyluridine(54) in tRNA + (6S)-5,6,7,8-tetrahydrofolate + NAD(+). It catalyses the reaction uridine(54) in tRNA + (6R)-5,10-methylene-5,6,7,8-tetrahydrofolate + NADPH + H(+) = 5-methyluridine(54) in tRNA + (6S)-5,6,7,8-tetrahydrofolate + NADP(+). Its function is as follows. Catalyzes the folate-dependent formation of 5-methyl-uridine at position 54 (M-5-U54) in all tRNAs. This chain is Methylenetetrahydrofolate--tRNA-(uracil-5-)-methyltransferase TrmFO, found in Fervidobacterium nodosum (strain ATCC 35602 / DSM 5306 / Rt17-B1).